The chain runs to 901 residues: Protein translocase subunit SecA (901 aa).

Residues Q87, 105–109, and D512 contribute to the ATP site; that span reads GEGKT. Residues 859–901 are disordered; the sequence is HQDDDSAAAAALAAQTGERKVGRNDPCPCGSGKKYKQCHGRLQ. 4 residues coordinate Zn(2+): C885, C887, C896, and H897. The span at 891-901 shows a compositional bias: basic residues; that stretch reads KKYKQCHGRLQ.

The protein belongs to the SecA family. Monomer and homodimer. Part of the essential Sec protein translocation apparatus which comprises SecA, SecYEG and auxiliary proteins SecDF-YajC and YidC. The cofactor is Zn(2+).

The protein resides in the cell inner membrane. It is found in the cytoplasm. The enzyme catalyses ATP + H2O + cellular proteinSide 1 = ADP + phosphate + cellular proteinSide 2.. In terms of biological role, part of the Sec protein translocase complex. Interacts with the SecYEG preprotein conducting channel. Has a central role in coupling the hydrolysis of ATP to the transfer of proteins into and across the cell membrane, serving both as a receptor for the preprotein-SecB complex and as an ATP-driven molecular motor driving the stepwise translocation of polypeptide chains across the membrane. This is Protein translocase subunit SecA from Shigella dysenteriae serotype 1 (strain Sd197).